Consider the following 657-residue polypeptide: Translation factor GUF1, mitochondrial (657 aa).

The N-terminal 39 residues, Met1–Asn39, are a transit peptide targeting the mitochondrion. Positions Glu59 to Val239 constitute a tr-type G domain. Residues Ala68–Ser75, Asp132–His136, and Asn186–Asp189 each bind GTP.

This sequence belongs to the TRAFAC class translation factor GTPase superfamily. Classic translation factor GTPase family. LepA subfamily.

It is found in the mitochondrion inner membrane. The enzyme catalyses GTP + H2O = GDP + phosphate + H(+). Functionally, promotes mitochondrial protein synthesis. May act as a fidelity factor of the translation reaction, by catalyzing a one-codon backward translocation of tRNAs on improperly translocated ribosomes. Binds to mitochondrial ribosomes in a GTP-dependent manner. The polypeptide is Translation factor GUF1, mitochondrial (Ajellomyces capsulatus (strain G186AR / H82 / ATCC MYA-2454 / RMSCC 2432) (Darling's disease fungus)).